The primary structure comprises 402 residues: Imidazolonepropionase (402 aa).

Fe(3+)-binding residues include histidine 66 and histidine 68. Histidine 66 and histidine 68 together coordinate Zn(2+). Residues arginine 75, tyrosine 138, and histidine 171 each coordinate 4-imidazolone-5-propanoate. Residue tyrosine 138 coordinates N-formimidoyl-L-glutamate. Histidine 236 serves as a coordination point for Fe(3+). Histidine 236 provides a ligand contact to Zn(2+). 4-imidazolone-5-propanoate is bound at residue glutamine 239. Residue aspartate 311 coordinates Fe(3+). Zn(2+) is bound at residue aspartate 311. Positions 313 and 315 each coordinate N-formimidoyl-L-glutamate. Threonine 316 serves as a coordination point for 4-imidazolone-5-propanoate.

This sequence belongs to the metallo-dependent hydrolases superfamily. HutI family. It depends on Zn(2+) as a cofactor. Fe(3+) is required as a cofactor.

The protein localises to the cytoplasm. It catalyses the reaction 4-imidazolone-5-propanoate + H2O = N-formimidoyl-L-glutamate. It participates in amino-acid degradation; L-histidine degradation into L-glutamate; N-formimidoyl-L-glutamate from L-histidine: step 3/3. Its function is as follows. Catalyzes the hydrolytic cleavage of the carbon-nitrogen bond in imidazolone-5-propanoate to yield N-formimidoyl-L-glutamate. It is the third step in the universal histidine degradation pathway. In Pseudomonas aeruginosa (strain ATCC 15692 / DSM 22644 / CIP 104116 / JCM 14847 / LMG 12228 / 1C / PRS 101 / PAO1), this protein is Imidazolonepropionase.